Reading from the N-terminus, the 108-residue chain is ATP-dependent Clp protease adapter protein ClpS (108 aa).

Residues 1–15 show a composition bias toward basic and acidic residues; the sequence is MPRESSPDSHHEHGV. Residues 1–24 form a disordered region; it reads MPRESSPDSHHEHGVAVEPARPEV.

This sequence belongs to the ClpS family. As to quaternary structure, binds to the N-terminal domain of the chaperone ClpA.

Its function is as follows. Involved in the modulation of the specificity of the ClpAP-mediated ATP-dependent protein degradation. This is ATP-dependent Clp protease adapter protein ClpS from Stenotrophomonas maltophilia (strain R551-3).